The sequence spans 242 residues: Small ribosomal subunit protein uS2 (242 aa).

This sequence belongs to the universal ribosomal protein uS2 family.

The polypeptide is Small ribosomal subunit protein uS2 (Tolumonas auensis (strain DSM 9187 / NBRC 110442 / TA 4)).